Consider the following 294-residue polypeptide: Glycine-rich protein 2 (294 aa).

An N-terminal signal peptide occupies residues 1-20; it reads MKMWFRLATFVTLIIEFAHC. The segment covering 205-221 has biased composition (low complexity); that stretch reads TGSQTGAAANGTSAGAA. The disordered stretch occupies residues 205-225; the sequence is TGSQTGAAANGTSAGAAVRGG.

As to expression, nacreous layer of shell (at protein level). Expressed primarily in the mantle with highest level in the mantle pallium and lower level in the mantle edge.

It is found in the secreted. In Pinctada maxima (Silver-lipped pearl oyster), this protein is Glycine-rich protein 2.